The primary structure comprises 199 residues: LIM domain-containing protein WLIM2b (199 aa).

2 consecutive LIM zinc-binding domains span residues 8 to 68 (QKCK…LFKE) and 106 to 166 (EKCA…LFKE).

As to quaternary structure, interacts with F-actin. Expressed in roots, leaves, stems, flowers and siliques. Barely detected in pollen.

The protein localises to the cytoplasm. It is found in the cytoskeleton. Binds to actin filaments and promotes cross-linking into thick bundles. Has an actin-stabilizing activity. The actin regulatory activities are not regulated by pH and [Ca(2+)]. The chain is LIM domain-containing protein WLIM2b from Arabidopsis thaliana (Mouse-ear cress).